The following is a 456-amino-acid chain: Exodeoxyribonuclease 7 large subunit (456 aa).

It belongs to the XseA family. Heterooligomer composed of large and small subunits.

It is found in the cytoplasm. It catalyses the reaction Exonucleolytic cleavage in either 5'- to 3'- or 3'- to 5'-direction to yield nucleoside 5'-phosphates.. Functionally, bidirectionally degrades single-stranded DNA into large acid-insoluble oligonucleotides, which are then degraded further into small acid-soluble oligonucleotides. The polypeptide is Exodeoxyribonuclease 7 large subunit (Escherichia coli (strain SE11)).